A 151-amino-acid chain; its full sequence is Mediator of RNA polymerase II transcription subunit 32 (151 aa).

Positions 128 to 151 are disordered; it reads GVAPGSVHSSSTGFDSRFSEDSTQ.

This sequence belongs to the mediator complex subunit 32 family. In terms of assembly, oligomers. Component of the Mediator complex. Interacts with MED6. Interacts with GEBPL.

It localises to the nucleus. Functionally, component of the Mediator complex, a coactivator involved in the regulated transcription of nearly all RNA polymerase II-dependent genes. Mediator functions as a bridge to convey information from gene-specific regulatory proteins to the basal RNA polymerase II transcription machinery. The Mediator complex, having a compact conformation in its free form, is recruited to promoters by direct interactions with regulatory proteins and serves for the assembly of a functional pre-initiation complex with RNA polymerase II and the general transcription factors. The chain is Mediator of RNA polymerase II transcription subunit 32 (MED32) from Arabidopsis thaliana (Mouse-ear cress).